The chain runs to 153 residues: Large ribosomal subunit protein uL22 (153 aa).

The protein belongs to the universal ribosomal protein uL22 family. In terms of assembly, part of the 50S ribosomal subunit.

Its function is as follows. This protein binds specifically to 23S rRNA. It makes multiple contacts with different domains of the 23S rRNA in the assembled 50S subunit and ribosome. Functionally, the globular domain of the protein is located near the polypeptide exit tunnel on the outside of the subunit, while an extended beta-hairpin is found that lines the wall of the exit tunnel in the center of the 70S ribosome. This Methanococcus aeolicus (strain ATCC BAA-1280 / DSM 17508 / OCM 812 / Nankai-3) protein is Large ribosomal subunit protein uL22.